The sequence spans 122 residues: Co-chaperonin GroES (122 aa).

This sequence belongs to the GroES chaperonin family. In terms of assembly, heptamer of 7 subunits arranged in a ring. Interacts with the chaperonin GroEL.

Its subcellular location is the cytoplasm. In terms of biological role, together with the chaperonin GroEL, plays an essential role in assisting protein folding. The GroEL-GroES system forms a nano-cage that allows encapsulation of the non-native substrate proteins and provides a physical environment optimized to promote and accelerate protein folding. GroES binds to the apical surface of the GroEL ring, thereby capping the opening of the GroEL channel. The chain is Co-chaperonin GroES from Aquifex aeolicus (strain VF5).